The following is a 374-amino-acid chain: MLSIIFGSKPREDEIDSVDRYMTKLFLRIIFIPDYTNKIHDLSENVSKNIKNLIMELKSGNIFEINKILDDLEYNIYTIDDESLTIKERVYNAVEIIFKVVSNEILRTESIDDKELEIIKKLHELVVLTDKVLRITYNSLNRSLEDINSYRRIIANNNLPDDIIRRLNIINAYIEKIKSDILSMRENEQRVLIICLSKFYNLYLSKDKKEREKLADEIKNLIEYLYFDWYYDFIDNIGEYEFKFIKNIAAMCLLYDYTKELEKDGSKEMFNHVIFKILRNGGFKVKEYDIIETLLNIRENLPKSSKIDVRYFDKELIKIIRGIVRESKKDVFYNNMKRLKEFVEELREMEKKLSEANNITLHDLRKLGFNDMFL.

This is an uncharacterized protein from Methanocaldococcus jannaschii (strain ATCC 43067 / DSM 2661 / JAL-1 / JCM 10045 / NBRC 100440) (Methanococcus jannaschii).